Reading from the N-terminus, the 292-residue chain is Claudin-23 (292 aa).

Residues Met1–Thr3 are Cytoplasmic-facing. A helical membrane pass occupies residues Pro4–Gly24. Residues Thr25–Arg81 are Extracellular-facing. The chain crosses the membrane as a helical span at residues Ala82–Val102. At Arg103–Asn110 the chain is on the cytoplasmic side. The chain crosses the membrane as a helical span at residues Phe111 to Pro131. The Extracellular segment spans residues Val132–Leu160. A helical membrane pass occupies residues Val161 to Phe181. The Cytoplasmic portion of the chain corresponds to Ala182 to Leu292. A disordered region spans residues Lys222–Leu292. Residues Asp273–Cys282 are compositionally biased toward polar residues.

The protein belongs to the claudin family. As to expression, expressed in germinal center B-cells, placenta, stomach as well as in colon tumor.

The protein resides in the cell junction. Its subcellular location is the tight junction. The protein localises to the cell membrane. Its function is as follows. Plays a major role in tight junction-specific obliteration of the intercellular space, through calcium-independent cell-adhesion activity. This chain is Claudin-23 (CLDN23), found in Homo sapiens (Human).